The sequence spans 1007 residues: Serine/threonine-protein kinase atg1 (1007 aa).

Residues 30–336 (YTRLSEIGRG…FDVYFAHKVL (307 aa)) form the Protein kinase domain. ATP is bound by residues 36–44 (IGRGSFAVV) and Lys-59. Asp-174 functions as the Proton acceptor in the catalytic mechanism. Disordered regions lie at residues 343 to 489 (LVAD…KEHA), 524 to 586 (GGQA…PTSA), 795 to 817 (RLPS…GSGT), and 878 to 900 (SRPG…DGGQ). Residues 373–387 (MKRENALSGGVRDEP) are compositionally biased toward basic and acidic residues. Residues 396–410 (AMTQSPRPETPSTPM) are compositionally biased toward polar residues. A compositionally biased stretch (basic and acidic residues) spans 477-489 (KPVEKAKDEKEHA). Residues 534–555 (SGAAPGTPPAGGSSPHASPSKA) show a composition bias toward low complexity. Positions 563 to 579 (SRADSAHVRQNSYDRRY) are enriched in basic and acidic residues. Over residues 805–817 (SNLSVGSSLGSGT) the composition is skewed to low complexity. A compositionally biased stretch (basic and acidic residues) spans 887–896 (DRADARRDNE).

The protein belongs to the protein kinase superfamily. Ser/Thr protein kinase family. APG1/unc-51/ULK1 subfamily. As to quaternary structure, homodimer. Forms a ternary complex with ATG13 and ATG17.

The protein localises to the cytoplasm. Its subcellular location is the preautophagosomal structure membrane. The catalysed reaction is L-seryl-[protein] + ATP = O-phospho-L-seryl-[protein] + ADP + H(+). The enzyme catalyses L-threonyl-[protein] + ATP = O-phospho-L-threonyl-[protein] + ADP + H(+). In terms of biological role, serine/threonine protein kinase involved in the cytoplasm to vacuole transport (Cvt) and found to be essential in autophagy, where it is required for the formation of autophagosomes. Involved in the clearance of protein aggregates which cannot be efficiently cleared by the proteasome. Required for selective autophagic degradation of the nucleus (nucleophagy) as well as for mitophagy which contributes to regulate mitochondrial quantity and quality by eliminating the mitochondria to a basal level to fulfill cellular energy requirements and preventing excess ROS production. Also involved in endoplasmic reticulum-specific autophagic process, in selective removal of ER-associated degradation (ERAD) substrates. Plays a key role in ATG9 and ATG23 cycling through the pre-autophagosomal structure and is necessary to promote ATG18 binding to ATG9 through phosphorylation of ATG9. Catalyzes phosphorylation of ATG4, decreasing the interaction between ATG4 and ATG8 and impairing deconjugation of PE-conjugated forms of ATG8. The protein is Serine/threonine-protein kinase atg1 of Aspergillus niger (strain ATCC MYA-4892 / CBS 513.88 / FGSC A1513).